A 449-amino-acid polypeptide reads, in one-letter code: Bifunctional protein GlmU (449 aa).

The interval 1-226 (MVAVAILAAG…FQEISGINDR (226 aa)) is pyrophosphorylase. Residues 7-10 (LAAG), Lys-21, Gln-73, and 78-79 (GT) contribute to the UDP-N-acetyl-alpha-D-glucosamine site. Asp-103 serves as a coordination point for Mg(2+). UDP-N-acetyl-alpha-D-glucosamine-binding residues include Gly-140, Glu-155, Asn-170, and Asn-224. Residue Asn-224 participates in Mg(2+) binding. Residues 227 to 247 (FQLSAAYEILQDRIKEKWMKA) are linker. Residues 248–449 (GVMIHQPDTV…KEIKGWRLQS (202 aa)) form an N-acetyltransferase region. UDP-N-acetyl-alpha-D-glucosamine contacts are provided by Arg-329 and Lys-347. His-359 serves as the catalytic Proton acceptor. Residues Tyr-362 and Asn-373 each contribute to the UDP-N-acetyl-alpha-D-glucosamine site. Acetyl-CoA is bound by residues Ala-376, 382–383 (NY), Ala-419, and Arg-436.

This sequence in the N-terminal section; belongs to the N-acetylglucosamine-1-phosphate uridyltransferase family. The protein in the C-terminal section; belongs to the transferase hexapeptide repeat family. Homotrimer. Mg(2+) serves as cofactor.

The protein resides in the cytoplasm. The enzyme catalyses alpha-D-glucosamine 1-phosphate + acetyl-CoA = N-acetyl-alpha-D-glucosamine 1-phosphate + CoA + H(+). It carries out the reaction N-acetyl-alpha-D-glucosamine 1-phosphate + UTP + H(+) = UDP-N-acetyl-alpha-D-glucosamine + diphosphate. It participates in nucleotide-sugar biosynthesis; UDP-N-acetyl-alpha-D-glucosamine biosynthesis; N-acetyl-alpha-D-glucosamine 1-phosphate from alpha-D-glucosamine 6-phosphate (route II): step 2/2. Its pathway is nucleotide-sugar biosynthesis; UDP-N-acetyl-alpha-D-glucosamine biosynthesis; UDP-N-acetyl-alpha-D-glucosamine from N-acetyl-alpha-D-glucosamine 1-phosphate: step 1/1. It functions in the pathway bacterial outer membrane biogenesis; LPS lipid A biosynthesis. Its function is as follows. Catalyzes the last two sequential reactions in the de novo biosynthetic pathway for UDP-N-acetylglucosamine (UDP-GlcNAc). The C-terminal domain catalyzes the transfer of acetyl group from acetyl coenzyme A to glucosamine-1-phosphate (GlcN-1-P) to produce N-acetylglucosamine-1-phosphate (GlcNAc-1-P), which is converted into UDP-GlcNAc by the transfer of uridine 5-monophosphate (from uridine 5-triphosphate), a reaction catalyzed by the N-terminal domain. The protein is Bifunctional protein GlmU of Picosynechococcus sp. (strain ATCC 27264 / PCC 7002 / PR-6) (Agmenellum quadruplicatum).